Consider the following 734-residue polypeptide: Meiotic driver SPOK1 (734 aa).

The stretch at 4–41 (KDRIAQLLRELEEAKARVEEAKAREAQERCEKERLQLE) forms a coiled coil. 2 disordered regions span residues 180–222 (ELTQ…ICSN) and 414–499 (LSSA…MADP). Polar residues predominate over residues 416 to 429 (SAPSSQNTDISEYT). Residues 457-468 (NEHDEHDEDHSE) are compositionally biased toward basic and acidic residues.

The protein resides in the cytoplasm. The protein localises to the nucleus. In terms of biological role, promotes unequal transmission of alleles from the parental zygote to progeny spores by acting as poison/antidote system, leading to poisoning of progeny that do not inherit the allele. May possess DNA nuclease activity that leads to spore killing, and a kinase activity that confers resistance to the nuclease activity. Can suppress meiotic drive by the P.anserina SPOK2, SPOK3 and SPOK4 proteins. This Podospora comata protein is Meiotic driver SPOK1.